We begin with the raw amino-acid sequence, 67 residues long: UPF0434 protein Bcep1808_2639 (67 aa).

It belongs to the UPF0434 family.

The protein is UPF0434 protein Bcep1808_2639 of Burkholderia vietnamiensis (strain G4 / LMG 22486) (Burkholderia cepacia (strain R1808)).